The following is a 147-amino-acid chain: Large ribosomal subunit protein uL16 (147 aa).

Belongs to the universal ribosomal protein uL16 family. Part of the 50S ribosomal subunit.

In terms of biological role, binds 23S rRNA and is also seen to make contacts with the A and possibly P site tRNAs. This chain is Large ribosomal subunit protein uL16, found in Caldicellulosiruptor saccharolyticus (strain ATCC 43494 / DSM 8903 / Tp8T 6331).